A 710-amino-acid chain; its full sequence is Putative transmembrane protein ORF710 (710 aa).

The first 33 residues, 1-33 (MKLDRKKKRLLLKTIFSIVILILPLTFLHPTNS), serve as a signal peptide directing secretion. 3 consecutive transmembrane segments (helical) span residues 41–61 (VPIQIIYNYNVSGGVIYTAPL), 76–95 (YGTLLYSYLFSTNPAFVVWY), and 689–709 (VAIVSMAYGTKIWIGVFIFAI).

The protein resides in the host membrane. In Acidianus convivator (ATV), this protein is Putative transmembrane protein ORF710.